The chain runs to 454 residues: Phosphoglucosamine mutase (454 aa).

Serine 104 functions as the Phosphoserine intermediate in the catalytic mechanism. Mg(2+) contacts are provided by serine 104, aspartate 244, aspartate 246, and aspartate 248. Phosphoserine is present on serine 104.

Belongs to the phosphohexose mutase family. It depends on Mg(2+) as a cofactor. Activated by phosphorylation.

The enzyme catalyses alpha-D-glucosamine 1-phosphate = D-glucosamine 6-phosphate. In terms of biological role, catalyzes the conversion of glucosamine-6-phosphate to glucosamine-1-phosphate. The protein is Phosphoglucosamine mutase of Lacticaseibacillus paracasei (strain ATCC 334 / BCRC 17002 / CCUG 31169 / CIP 107868 / KCTC 3260 / NRRL B-441) (Lactobacillus paracasei).